A 276-amino-acid polypeptide reads, in one-letter code: Plant cysteine oxidase 2 (276 aa).

The interval 1-40 (MGTDTVMSGRVRKDLSKTNPNGNIPENRSNSRKKIQRRSK) is disordered. The span at 17 to 28 (KTNPNGNIPENR) shows a compositional bias: polar residues. Residues 30–40 (NSRKKIQRRSK) show a composition bias toward basic residues. Fe cation-binding residues include His134, His136, and His197.

It belongs to the cysteine dioxygenase family. Requires Fe(2+) as cofactor.

It is found in the nucleus. It localises to the cytoplasm. The enzyme catalyses L-cysteine + O2 = 3-sulfino-L-alanine + H(+). In terms of biological role, catalyzes the oxidation of N-terminal cysteine residues (N-Cys), thus preparing the protein for N-end rule pathway-mediated proteasomal degradation, upstream of the N-end rule enzymes ATE1, ATE2 and PRT6. Controls the preparation of the group VII ethylene response factor (ERF-VII) proteins for degradation via the 26S proteasome N-end rule pathway. Acts as an oxygen sensor that controls the stability of ERF-VII proteins, which are stabilized in flooding-induced hypoxia, and regulate transcriptional adaptation to these adverse conditions. Not active on Cys located inside or at the C-terminus of a peptide. Acts redundantly with PCO1 to repress the anaerobic response. The chain is Plant cysteine oxidase 2 from Arabidopsis thaliana (Mouse-ear cress).